Reading from the N-terminus, the 630-residue chain is Plastin-3 (630 aa).

2 EF-hand domains span residues D12–P47 and K52–S87. D25, N27, N29, E36, D65, N67, D69, K71, and E76 together coordinate Ca(2+). Actin-binding stretches follow at residues T109–K382 and P383–M627. Calponin-homology (CH) domains lie at E123–L239 and L267–P378. Phosphoserine occurs at positions 268, 293, 326, and 339. T391 is subject to Phosphothreonine. Calponin-homology (CH) domains lie at T397–T506 and K518–M627.

As to quaternary structure, monomer.

Its subcellular location is the cytoplasm. Functionally, actin-bundling protein. The chain is Plastin-3 (PLS3) from Bos taurus (Bovine).